The sequence spans 230 residues: Ribonuclease 3 (230 aa).

Residues 1 to 134 form the RNase III domain; it reads MKQLEELLST…FLGALLLDKG (134 aa). E47 lines the Mg(2+) pocket. The active site involves D51. D120 and E123 together coordinate Mg(2+). E123 is an active-site residue. Positions 160 to 229 constitute a DRBM domain; it reads DYKTCLQEFL…AKNALAQLSE (70 aa).

It belongs to the ribonuclease III family. In terms of assembly, homodimer. The cofactor is Mg(2+).

It is found in the cytoplasm. The enzyme catalyses Endonucleolytic cleavage to 5'-phosphomonoester.. In terms of biological role, digests double-stranded RNA. Involved in the processing of primary rRNA transcript to yield the immediate precursors to the large and small rRNAs (23S and 16S). Processes some mRNAs, and tRNAs when they are encoded in the rRNA operon. Processes pre-crRNA and tracrRNA of type II CRISPR loci if present in the organism. The polypeptide is Ribonuclease 3 (Streptococcus pyogenes serotype M3 (strain SSI-1)).